The primary structure comprises 1016 residues: KN motif and ankyrin repeat domain-containing protein 4 (1016 aa).

6 disordered regions span residues 1 to 26 (MEKIDGKDQSSQGDEEKEPPKSYPYS), 70 to 91 (PRNFSLPNSGDRTYAVPPQQNW), 235 to 259 (AEPEEGDLKASSHLSQPGPSSAVQS), 401 to 485 (LSQE…LPRG), 506 to 563 (EEGS…SPQD), and 622 to 755 (AQAP…VSHL). Composition is skewed to polar residues over residues 70–80 (PRNFSLPNSGD) and 246–258 (SHLSQPGPSSAVQ). Residues 346 to 409 (SSLKNQVLAL…KLSQERASEA (64 aa)) adopt a coiled-coil conformation. Basic and acidic residues-rich tracts occupy residues 401-414 (LSQERASEAPDRTD) and 445-454 (PECRAPRAEK). A compositionally biased stretch (polar residues) spans 460–469 (VQNNHKQSYP). Over residues 632–650 (TPAPPPSTPPPPPPPPPEI) the composition is skewed to pro residues. Phosphothreonine is present on Thr639. Acidic residues predominate over residues 695-708 (TSGEDSSPEDLSDS). Basic and acidic residues-rich tracts occupy residues 709–727 (ETEKKQDCSESREDRDLHP) and 745–755 (TSDRGEEVSHL). ANK repeat units follow at residues 838–868 (SGNTALHYSVSHSNFAIVKLLLDTGVCNVDH), 877–905 (VMITPLASAETKEDMAVVWKLLREGNVNI), 910–939 (GGQTALMLGVSHDREDMVQALLSCQADVNL), 943–973 (DGSSALMLACHQGNADLVRLLLAHPACNSSL), and 977–1007 (AGRTALSLVLNSPAHVEIAELLRAHSEPGRS).

Its subcellular location is the cytoplasm. In terms of biological role, may be involved in the control of cytoskeleton formation by regulating actin polymerization. The sequence is that of KN motif and ankyrin repeat domain-containing protein 4 (Kank4) from Mus musculus (Mouse).